The sequence spans 59 residues: Phycobilisome degradation protein NblA (59 aa).

It to chloroplast ycf18.

Functionally, involved in phycobilisome (PBS) degradation during nutrient deprivation. May mark the PBS for degradation by covalent association with PBS components or may disrupt the PBS via ionic interactions. This is Phycobilisome degradation protein NblA from Synechococcus elongatus (strain ATCC 33912 / PCC 7942 / FACHB-805) (Anacystis nidulans R2).